A 187-amino-acid polypeptide reads, in one-letter code: UPF0301 protein lpl0620 (187 aa).

Belongs to the UPF0301 (AlgH) family.

The sequence is that of UPF0301 protein lpl0620 from Legionella pneumophila (strain Lens).